Here is a 599-residue protein sequence, read N- to C-terminus: Transcription factor COE4 (599 aa).

Residues 64 to 67 (RKSN) form an interaction with DNA region. The C5-type zinc finger occupies 152-171 (CRVLLTHEIMCSRCCDRKSC). Interaction with DNA regions lie at residues 198–205 (NCLKNAGN) and 237–240 (NNSK). Residues 256-339 (PCIKAISPGE…KGAPGRFVYT (84 aa)) enclose the IPT/TIG domain. Disordered stretches follow at residues 449 to 473 (GYAR…SSYG) and 556 to 586 (VLRP…TDKF). Positions 464–473 (SPGSQQSSYG) are enriched in low complexity.

Belongs to the COE family. Forms either a homodimer or a heterodimer with a related family member. As to expression, expressed in the olfactory epithelium, including in both neuronal and basal cell layers. Absent in the vomeronasal organ. Absent from NK cells and CD8(+) T cells.

The protein resides in the nucleus. Functionally, transcription factor. Positively modulates transcription, perhaps less strongly than other early B cell factor/EBF family proteins. Binds an EBF1/Olf-1 consensus site in vitro. This is Transcription factor COE4 (Ebf4) from Mus musculus (Mouse).